The following is a 431-amino-acid chain: Enolase (431 aa).

A (2R)-2-phosphoglycerate-binding site is contributed by Gln168. Glu210 (proton donor) is an active-site residue. Asp247, Glu291, and Asp318 together coordinate Mg(2+). (2R)-2-phosphoglycerate-binding residues include Lys343, Arg372, Ser373, and Lys394. The active-site Proton acceptor is Lys343.

This sequence belongs to the enolase family. As to quaternary structure, component of the RNA degradosome, a multiprotein complex involved in RNA processing and mRNA degradation. Requires Mg(2+) as cofactor.

The protein localises to the cytoplasm. Its subcellular location is the secreted. The protein resides in the cell surface. It catalyses the reaction (2R)-2-phosphoglycerate = phosphoenolpyruvate + H2O. It functions in the pathway carbohydrate degradation; glycolysis; pyruvate from D-glyceraldehyde 3-phosphate: step 4/5. In terms of biological role, catalyzes the reversible conversion of 2-phosphoglycerate (2-PG) into phosphoenolpyruvate (PEP). It is essential for the degradation of carbohydrates via glycolysis. The protein is Enolase of Acinetobacter baumannii (strain SDF).